The chain runs to 250 residues: Triosephosphate isomerase (250 aa).

10–12 is a substrate binding site; the sequence is NWK. The active-site Electrophile is His-96. Catalysis depends on Glu-168, which acts as the Proton acceptor. Residues Gly-174, Ser-214, and 235–236 contribute to the substrate site; that span reads GG.

Belongs to the triosephosphate isomerase family. Homodimer.

It is found in the cytoplasm. The catalysed reaction is D-glyceraldehyde 3-phosphate = dihydroxyacetone phosphate. Its pathway is carbohydrate biosynthesis; gluconeogenesis. It participates in carbohydrate degradation; glycolysis; D-glyceraldehyde 3-phosphate from glycerone phosphate: step 1/1. Its function is as follows. Involved in the gluconeogenesis. Catalyzes stereospecifically the conversion of dihydroxyacetone phosphate (DHAP) to D-glyceraldehyde-3-phosphate (G3P). This Streptococcus suis (strain 98HAH33) protein is Triosephosphate isomerase.